A 157-amino-acid chain; its full sequence is MNYKERRQLIYELIQTNKIETQEQLLLLLQAHGANATQATISRDIRALHISKVPDDDGRSYYVKAPSAAVNRERQLKDAIRERVATVTAVQFTVVIQTSMKLTYAPILAGLIDDIDNDDVVGTIAGTDTLLVILKDAEAAASFADWAQAIVKERKIY.

This sequence belongs to the ArgR family.

The protein localises to the cytoplasm. It participates in amino-acid biosynthesis; L-arginine biosynthesis [regulation]. Regulates arginine biosynthesis genes. In Lactobacillus delbrueckii subsp. bulgaricus (strain ATCC 11842 / DSM 20081 / BCRC 10696 / JCM 1002 / NBRC 13953 / NCIMB 11778 / NCTC 12712 / WDCM 00102 / Lb 14), this protein is Arginine repressor.